Here is a 499-residue protein sequence, read N- to C-terminus: Maturase K (499 aa).

It belongs to the intron maturase 2 family. MatK subfamily.

The protein resides in the plastid. It localises to the chloroplast. Usually encoded in the trnK tRNA gene intron. Probably assists in splicing its own and other chloroplast group II introns. The protein is Maturase K of Ceratozamia mexicana (Mexican horncone).